Consider the following 713-residue polypeptide: Polyribonucleotide nucleotidyltransferase (713 aa).

Mg(2+) contacts are provided by D488 and D494. A KH domain is found at 555–614 (PQMEIIKVPTDKIRDVIGSGGKVIRGIVDETGAKVNIDDDGTVQISAMDRKSIDAAIKMI). The S1 motif domain maps to 624–692 (GEIYEGKVVS…ERGKVRLSMK (69 aa)).

This sequence belongs to the polyribonucleotide nucleotidyltransferase family. Requires Mg(2+) as cofactor.

It is found in the cytoplasm. It catalyses the reaction RNA(n+1) + phosphate = RNA(n) + a ribonucleoside 5'-diphosphate. Functionally, involved in mRNA degradation. Catalyzes the phosphorolysis of single-stranded polyribonucleotides processively in the 3'- to 5'-direction. In Hyphomonas neptunium (strain ATCC 15444), this protein is Polyribonucleotide nucleotidyltransferase.